The sequence spans 1295 residues: DNA-directed RNA polymerase subunit beta' (1295 aa).

Residues cysteine 66, cysteine 68, cysteine 81, and cysteine 84 each contribute to the Zn(2+) site. 3 residues coordinate Mg(2+): aspartate 562, aspartate 564, and aspartate 566. 4 residues coordinate Zn(2+): cysteine 901, cysteine 975, cysteine 982, and cysteine 985.

The protein belongs to the RNA polymerase beta' chain family. In terms of assembly, the RNAP catalytic core consists of 2 alpha, 1 beta, 1 beta' and 1 omega subunit. When a sigma factor is associated with the core the holoenzyme is formed, which can initiate transcription. It depends on Mg(2+) as a cofactor. Zn(2+) is required as a cofactor.

The enzyme catalyses RNA(n) + a ribonucleoside 5'-triphosphate = RNA(n+1) + diphosphate. DNA-dependent RNA polymerase catalyzes the transcription of DNA into RNA using the four ribonucleoside triphosphates as substrates. The protein is DNA-directed RNA polymerase subunit beta' of Rubrobacter xylanophilus (strain DSM 9941 / JCM 11954 / NBRC 16129 / PRD-1).